The primary structure comprises 90 residues: Probable Fe(2+)-trafficking protein (90 aa).

This sequence belongs to the Fe(2+)-trafficking protein family.

In terms of biological role, could be a mediator in iron transactions between iron acquisition and iron-requiring processes, such as synthesis and/or repair of Fe-S clusters in biosynthetic enzymes. In Halorhodospira halophila (strain DSM 244 / SL1) (Ectothiorhodospira halophila (strain DSM 244 / SL1)), this protein is Probable Fe(2+)-trafficking protein.